The following is a 253-amino-acid chain: Proproteinase E (253 aa).

The propeptide at 1–11 (FSQPFSRPSSR) is activation peptide. Positions 12–251 (VVNGEDAVPY…FIDWIDETIA (240 aa)) constitute a Peptidase S1 domain. Intrachain disulfides connect C41/C57, C100/C103, C140/C206, C171/C187, and C196/C227.

Belongs to the peptidase S1 family. As to quaternary structure, monomer. The zymogen is secreted as a ternary complex composed of procarboxypeptidase A, chymotrypsinogen C and proproteinase E. In terms of tissue distribution, pancreas.

Its subcellular location is the secreted. The protein localises to the extracellular space. In terms of biological role, may protect procarboxypeptidase A against denaturation in the acidic environment of the ruminant duodenum. The sequence is that of Proproteinase E from Bos taurus (Bovine).